The chain runs to 659 residues: Mannosyl-oligosaccharide 1,2-alpha-mannosidase IA (659 aa).

The Cytoplasmic segment spans residues 1–48; sequence MPVGGLLPLFSSPAGGGLGGGLGGGLGGGGGGGGRKGSGPSAFRLTEK. Residues 49-69 traverse the membrane as a helical; Signal-anchor for type II membrane protein segment; the sequence is FVLLLVFSAFITLCFGAIFFL. Topologically, residues 70–659 are lumenal; that stretch reads PDSSKLLSGV…NIKKVEDNEK (590 aa). The disordered stretch occupies residues 88–121; the sequence is QPAADHKPGPGARAEDAADGRARPGEEGAPGDPA. Basic and acidic residues predominate over residues 91–113; that stretch reads ADHKPGPGARAEDAADGRARPGE. An intrachain disulfide couples cysteine 482 to cysteine 514. Residue glutamate 528 is the Proton donor of the active site. Residue threonine 639 participates in Ca(2+) binding.

This sequence belongs to the glycosyl hydrolase 47 family. Ca(2+) is required as a cofactor.

It localises to the endoplasmic reticulum membrane. The catalysed reaction is N(4)-(alpha-D-Man-(1-&gt;2)-alpha-D-Man-(1-&gt;2)-alpha-D-Man-(1-&gt;3)-[alpha-D-Man-(1-&gt;2)-alpha-D-Man-(1-&gt;3)-[alpha-D-Man-(1-&gt;2)-alpha-D-Man-(1-&gt;6)]-alpha-D-Man-(1-&gt;6)]-beta-D-Man-(1-&gt;4)-beta-D-GlcNAc-(1-&gt;4)-beta-D-GlcNAc)-L-asparaginyl-[protein] (N-glucan mannose isomer 9A1,2,3B1,2,3) + 4 H2O = N(4)-(alpha-D-Man-(1-&gt;3)-[alpha-D-Man-(1-&gt;3)-[alpha-D-Man-(1-&gt;6)]-alpha-D-Man-(1-&gt;6)]-beta-D-Man-(1-&gt;4)-beta-D-GlcNAc-(1-&gt;4)-beta-D-GlcNAc)-L-asparaginyl-[protein] (N-glucan mannose isomer 5A1,2) + 4 beta-D-mannose. It carries out the reaction N(4)-(alpha-D-Man-(1-&gt;2)-alpha-D-Man-(1-&gt;2)-alpha-D-Man-(1-&gt;3)-[alpha-D-Man-(1-&gt;3)-[alpha-D-Man-(1-&gt;2)-alpha-D-Man-(1-&gt;6)]-alpha-D-Man-(1-&gt;6)]-beta-D-Man-(1-&gt;4)-beta-D-GlcNAc-(1-&gt;4)-beta-D-GlcNAc)-L-asparaginyl-[protein] (N-glucan mannose isomer 8A1,2,3B1,3) + 3 H2O = N(4)-(alpha-D-Man-(1-&gt;3)-[alpha-D-Man-(1-&gt;3)-[alpha-D-Man-(1-&gt;6)]-alpha-D-Man-(1-&gt;6)]-beta-D-Man-(1-&gt;4)-beta-D-GlcNAc-(1-&gt;4)-beta-D-GlcNAc)-L-asparaginyl-[protein] (N-glucan mannose isomer 5A1,2) + 3 beta-D-mannose. It participates in protein modification; protein glycosylation. With respect to regulation, inhibited by both 1-deoxymannojirimycin and kifunensine. Its function is as follows. Involved in the maturation of Asn-linked oligosaccharides. Progressively trim alpha-1,2-linked mannose residues from Man(9)GlcNAc(2) to produce Man(5)GlcNAc(2). This Sus scrofa (Pig) protein is Mannosyl-oligosaccharide 1,2-alpha-mannosidase IA (MAN1A1).